The following is a 642-amino-acid chain: MGKIIGIDLGTTNSCVAILEGDKPRVIENSEGGRTTPSIVAYTDDETLVGQSAKRQAVTNPTNTLFAIKRLIGRRFEDDVVQKDIKMVPYTIAKADNGDAWVDVKGKKMAPPQISAEVLKKMKKTAEDFLGEKVTEAVITVPAYFNDAQRQATKDAGRIAGLEVKRIINEPTAAALAYGMDKKGGDRKVAVYDLGGGTFDISIIEIADVDGEMQFEVLATNGDTFLGGEDFDLRLIDYLAQEFKKDSGIDLKGDPLAMQRLKEAAEKAKIELSSSQQTDVNLPYITADASGPKHLNVKVTRAKLESLVEELVERSLEPCRIALKDSGCSSSEIDEVILVGGQTRMPLVQSKVADFFGKEARKDVNPDEAVAIGAAIQGAVLSGDVKDVLLLDVTPLSLSIETMGGVSTPIIEKNTTIPTKKSQVFSTAEDNQTAVTIHVLQGERKQAQMNKSLGRFDLTGLPPAPRGVPQVEVTFDIDANGIMHVSAKDKATGKEQSIVIKASSGLSEDEIDKMVQDAEAHAAEDKKFEELAASRNQADALVHATQKTLKDAGDKVTAEEKVAIEAAIKELEEAIKGDDKEAIESRMQKLSEASSSMAQKMYAEQAAQQGGDAGAQAEDAAGKPADDAVDAEFEEVKDGDKK.

Threonine 198 is modified (phosphothreonine; by autocatalysis). A compositionally biased stretch (basic and acidic residues) spans 578–589; it reads DDKEAIESRMQK. Positions 578-642 are disordered; that stretch reads DDKEAIESRM…FEEVKDGDKK (65 aa). Residues 603–619 show a composition bias toward low complexity; sequence AEQAAQQGGDAGAQAED.

The protein belongs to the heat shock protein 70 family.

In terms of biological role, acts as a chaperone. The protein is Chaperone protein DnaK of Hahella chejuensis (strain KCTC 2396).